The chain runs to 598 residues: Protein HIGH CHLOROPHYLL FLUORESCENCE PHENOTYPE 173, chloroplastic (598 aa).

A chloroplast-targeting transit peptide spans 1–79 (MVGSIVGSNM…ITTKESEETV (79 aa)). The segment at 42-106 (VIPRAQSSSS…PTLKLDDVNP (65 aa)) is disordered. Over residues 73 to 84 (KESEETVAKKLD) the composition is skewed to basic and acidic residues. Residues 87-97 (PPSPQSPPSPP) are compositionally biased toward pro residues.

Belongs to the NmrA-type oxidoreductase family. In terms of assembly, component of a high molecular weight complex containing psbA mRNA, OHP1, OHP2 and HCF244, and PSII core proteins D1/D2, HCF136 and HCF173. Interacts with LPE1.

Its subcellular location is the plastid. The protein resides in the chloroplast membrane. It is found in the chloroplast thylakoid membrane. It localises to the chloroplast stroma. Its function is as follows. Auxiliary factor required, together with HCF244, for the biogenesis of photosystem II (PSII), especially for the synthesis of the reaction center proteins (e.g. D1), via the regulation of the corresponding mRNA (e.g. psbA) translation initiation (ribosomal loading) and stabilization. The chain is Protein HIGH CHLOROPHYLL FLUORESCENCE PHENOTYPE 173, chloroplastic from Arabidopsis thaliana (Mouse-ear cress).